Reading from the N-terminus, the 415-residue chain is Serine hydroxymethyltransferase (415 aa).

(6S)-5,6,7,8-tetrahydrofolate is bound by residues L117 and 121-123 (GHL). K226 bears the N6-(pyridoxal phosphate)lysine mark. (6S)-5,6,7,8-tetrahydrofolate-binding positions include E241 and 349-351 (SPF).

It belongs to the SHMT family. In terms of assembly, homodimer. It depends on pyridoxal 5'-phosphate as a cofactor.

It localises to the cytoplasm. The catalysed reaction is (6R)-5,10-methylene-5,6,7,8-tetrahydrofolate + glycine + H2O = (6S)-5,6,7,8-tetrahydrofolate + L-serine. The protein operates within one-carbon metabolism; tetrahydrofolate interconversion. It participates in amino-acid biosynthesis; glycine biosynthesis; glycine from L-serine: step 1/1. Catalyzes the reversible interconversion of serine and glycine with tetrahydrofolate (THF) serving as the one-carbon carrier. This reaction serves as the major source of one-carbon groups required for the biosynthesis of purines, thymidylate, methionine, and other important biomolecules. Also exhibits THF-independent aldolase activity toward beta-hydroxyamino acids, producing glycine and aldehydes, via a retro-aldol mechanism. The polypeptide is Serine hydroxymethyltransferase (Geobacter metallireducens (strain ATCC 53774 / DSM 7210 / GS-15)).